The primary structure comprises 300 residues: MGYVRTGILMAVMTALFLGVGALIGGQSGAIIALVIAAGMNLFTFWNSDRAVLSMHGAHEVDPRAAPDLYNMVRGLADRAGMPMPKLYLIETDQPNAFATGRNPENAAVAVTRGLLRALTPEEVAGVVAHELAHIRNRDTLLMTVTATFAGAISMLANFAFFFGGSSNEEGERPMGLVGTLALMFLAPLAAGLVQMAISRSREYEADRIGAEICGRPLWLASALGKIEGLAQRIDNVRAERNPATAHMFIVNPLHAMGHDRLFATHPNTANRIAALRAMAEGAPQASRIPRVAARRGPWN.

2 consecutive transmembrane segments (helical) span residues 7 to 24 and 29 to 46; these read GILMAVMTALFLGVGALI and GAIIALVIAAGMNLFTFW. A Zn(2+)-binding site is contributed by H130. The active site involves E131. H134 lines the Zn(2+) pocket. The next 2 helical transmembrane spans lie at 145–165 and 174–194; these read VTATFAGAISMLANFAFFFGG and PMGLVGTLALMFLAPLAAGLV. E203 contributes to the Zn(2+) binding site.

The protein belongs to the peptidase M48B family. Zn(2+) is required as a cofactor.

It localises to the cell inner membrane. In Cereibacter sphaeroides (strain ATCC 17029 / ATH 2.4.9) (Rhodobacter sphaeroides), this protein is Protease HtpX homolog.